A 193-amino-acid polypeptide reads, in one-letter code: Interleukin-18 (193 aa).

Residues 1 to 36 (MAAEPVEDNCINFVAMKFIDNTLYFIAEDDENLESD) constitute a propeptide that is removed on maturation.

The protein belongs to the IL-1 family. As to quaternary structure, forms a ternary complex with ligand-binding receptor subunit IL18R1 and signaling receptor subunit IL18RAP at the plasma membrane. Mature IL18 first binds to IL18R1 forming a low affinity binary complex, which then interacts with IL18RAP to form a high affinity ternary complex that signals inside the cell. Interacts with cargo receptor TMED10; the interaction mediates the translocation from the cytoplasm into the ERGIC (endoplasmic reticulum-Golgi intermediate compartment) and thereby secretion. In terms of processing, the pro-IL-18 precursor is processed by CASP1, CASP4 or CASP5 to yield its mature, active form. The pro-IL-18 precursor features autoinhibitory interactions between the propeptide and the post-cleavage-site region, preventing recognition by the IL18R1 receptor. Processing by CASP1, CASP4 or CASP5 induces conformational changes to generate critical receptor-binding sites. The mature form is then secreted and released in the extracellular milieu by passing through the gasdermin-D (GSDMD) pore. In contrast, cleavage by CASP3 inactivates IL18. Expressed in ovarian carcinoma but undetectable in normal ovarian epithelial cells. Resistant to proteolytic activation by caspase-1 and -4.

It localises to the cytoplasm. The protein resides in the cytosol. Its subcellular location is the secreted. In terms of biological role, pro-inflammatory cytokine primarily involved in epithelial barrier repair, polarized T-helper 1 (Th1) cell and natural killer (NK) cell immune responses. Upon binding to IL18R1 and IL18RAP, forms a signaling ternary complex which activates NF-kappa-B, triggering synthesis of inflammatory mediators. Synergizes with IL12/interleukin-12 to induce IFNG synthesis from T-helper 1 (Th1) cells and natural killer (NK) cells. Involved in transduction of inflammation downstream of pyroptosis: its mature form is specifically released in the extracellular milieu by passing through the gasdermin-D (GSDMD) pore. The protein is Interleukin-18 of Homo sapiens (Human).